The primary structure comprises 137 residues: ATP synthase epsilon chain (137 aa).

Belongs to the ATPase epsilon chain family. In terms of assembly, F-type ATPases have 2 components, CF(1) - the catalytic core - and CF(0) - the membrane proton channel. CF(1) has five subunits: alpha(3), beta(3), gamma(1), delta(1), epsilon(1). CF(0) has three main subunits: a, b and c.

The protein localises to the cell membrane. Produces ATP from ADP in the presence of a proton gradient across the membrane. This is ATP synthase epsilon chain from Caldicellulosiruptor saccharolyticus (strain ATCC 43494 / DSM 8903 / Tp8T 6331).